A 185-amino-acid chain; its full sequence is Dehydrin ERD14 (185 aa).

Composition is skewed to basic and acidic residues over residues 1–13 (MAEE…EQEV), 25–45 (VTDR…KPEE), 52–78 (FEQK…HRSD), and 103–134 (KPTT…KPED). Disordered regions lie at residues 1 to 138 (MAEE…GSAV) and 166 to 185 (EKLP…KDKE). Ala-2 is modified (N-acetylalanine). Phosphoserine is present on Ser-59. A run of 2 repeats spans residues 112 to 132 (EEEK…HKKP) and 154 to 174 (PVEK…YHPK). A 2 X 21 AA repeats, Lys-rich region spans residues 112 to 174 (EEEKKGFMEK…KEKLPGYHPK (63 aa)).

It belongs to the plant dehydrin family. As to expression, in stems, cauline leaves, roots and flowers. Low levels found in maturing seeds. Absent in dry seeds.

Its function is as follows. Intrinsically disordered protein acting as a chaperone. Prevents heat-induced aggregation and/or inactivation of various substrates. Binds to acidic phospholipid vesicles without affecting membrane fluidity. This chain is Dehydrin ERD14 (ERD14), found in Arabidopsis thaliana (Mouse-ear cress).